A 142-amino-acid polypeptide reads, in one-letter code: UPF0310 protein PYRAB08750 (142 aa).

It belongs to the UPF0310 family.

The chain is UPF0310 protein PYRAB08750 from Pyrococcus abyssi (strain GE5 / Orsay).